The chain runs to 262 residues: Probable aminoglycoside 3'-phosphotransferase (262 aa).

Asp187 functions as the Proton acceptor in the catalytic mechanism.

This sequence belongs to the aminoglycoside phosphotransferase family.

The catalysed reaction is kanamycin A + ATP = kanamycin 3'-phosphate + ADP + H(+). This Lactococcus lactis subsp. lactis (strain IL1403) (Streptococcus lactis) protein is Probable aminoglycoside 3'-phosphotransferase (ymdC).